The chain runs to 83 residues: U2-hexatoxin-Hi1a (83 aa).

The first 23 residues, M1–A23, serve as a signal peptide directing secretion. The propeptide occupies D24–R45. Cystine bridges form between C47–C63, C54–C68, C62–C78, and C70–C76.

Belongs to the neurotoxin 07 (Beta/delta-agtx) family. Expressed by the venom gland.

It localises to the secreted. Its function is as follows. Inhibits sodium channels (Nav) of insects. This chain is U2-hexatoxin-Hi1a, found in Hadronyche infensa (Fraser island funnel-web spider).